Here is a 106-residue protein sequence, read N- to C-terminus: Large ribosomal subunit protein uL24 (106 aa).

Belongs to the universal ribosomal protein uL24 family. As to quaternary structure, part of the 50S ribosomal subunit.

One of two assembly initiator proteins, it binds directly to the 5'-end of the 23S rRNA, where it nucleates assembly of the 50S subunit. In terms of biological role, one of the proteins that surrounds the polypeptide exit tunnel on the outside of the subunit. The chain is Large ribosomal subunit protein uL24 from Bordetella bronchiseptica (strain ATCC BAA-588 / NCTC 13252 / RB50) (Alcaligenes bronchisepticus).